Consider the following 267-residue polypeptide: Undecaprenyl-diphosphatase (267 aa).

Helical transmembrane passes span 4-24 (LYAL…ISST), 41-61 (FWKS…IFVF), 69-89 (LDIW…GLFV), 96-116 (LFNG…FILI), 173-193 (AAEF…AYSI), 207-227 (IPLG…IKFF), and 239-259 (FGIY…SGIL).

The protein belongs to the UppP family.

It is found in the cell inner membrane. The catalysed reaction is di-trans,octa-cis-undecaprenyl diphosphate + H2O = di-trans,octa-cis-undecaprenyl phosphate + phosphate + H(+). Functionally, catalyzes the dephosphorylation of undecaprenyl diphosphate (UPP). Confers resistance to bacitracin. In Campylobacter jejuni subsp. jejuni serotype O:2 (strain ATCC 700819 / NCTC 11168), this protein is Undecaprenyl-diphosphatase.